Here is a 355-residue protein sequence, read N- to C-terminus: Beta-1,2-mannobiose phosphorylase (355 aa).

Beta-D-Manp-(1-&gt;2)-beta-D-Manp-(1-&gt;2)-D-Manp-binding positions include Asn-31, Arg-46, Arg-89, 140–141, Lys-188, Tyr-273, and Asp-333; that span reads ED.

The protein belongs to the glycosyl hydrolase 130 family. Homodimer.

It catalyses the reaction beta-D-mannopyranosyl-(1-&gt;2)-D-mannopyranose + phosphate = alpha-D-mannose 1-phosphate + D-mannose. Functionally, catalyzes the reversible phosphorolysis of 1,2-beta-oligomannan. In phosphorolytic reactions, prefers beta-1,2-mannobiose (beta-1,2-Man2) as substrate, but can also use beta-1,2-mannotriose. The protein is Beta-1,2-mannobiose phosphorylase of Listeria innocua serovar 6a (strain ATCC BAA-680 / CLIP 11262).